Here is a 317-residue protein sequence, read N- to C-terminus: DNA repair nuclease/redox regulator APEX1 (317 aa).

The disordered stretch occupies residues Met-1–Ser-58. Residues Pro-2–Thr-32 form a necessary for interaction with YBX1, binding to RNA, association together with NPM1 to rRNA, endoribonuclease activity on abasic RNA and localization in the nucleoli region. N6-acetyllysine; by EP300 is present on residues Lys-6 and Lys-7. The Nuclear localization signal (NLS) signature appears at Ala-8–Asp-12. Residues Glu-15–Ala-37 show a composition bias toward basic and acidic residues. Position 18 is a phosphoserine (Ser-18). A necessary for interaction with NPM1 and for efficient rRNA binding region spans residues Thr-22–Thr-32. N6-acetyllysine is present on residues Lys-26, Lys-30, Lys-31, and Lys-34. Position 53 is a phosphoserine (Ser-53). The Nuclear export signal (NES) motif lies at Ile-63–Gly-79. Cys-64 carries the S-nitrosocysteine; alternate modification. Cysteines 64 and 92 form a disulfide. Asp-69 is a binding site for Mg(2+). Residue Cys-92 is modified to S-nitrosocysteine; alternate. Glu-95 provides a ligand contact to Mg(2+). The active site involves Tyr-170. An N6-acetyllysine modification is found at Lys-196. The Mg(2+) site is built by Asp-209 and Asn-211. Asp-209 functions as the Proton donor/acceptor in the catalytic mechanism. Thr-232 carries the post-translational modification Phosphothreonine; by CDK5. Residues His-288–Leu-317 form a mitochondrial targeting sequence (MTS) region. Residue Asp-307 coordinates Mg(2+). S-nitrosocysteine is present on Cys-309.

This sequence belongs to the DNA repair enzymes AP/ExoA family. In terms of assembly, monomer. Homodimer; disulfide-linked. Component of the SET complex, composed of at least APEX1, SET, ANP32A, HMGB2, NME1 and TREX1. Associates with the dimer XRCC5/XRCC6 in a DNA-dependent manner. Interacts with SIRT1; the interaction is increased in the context of genotoxic stress. Interacts with HDAC1, HDAC2 and HDAC3; the interactions are not dependent on the APEX1 acetylation status. Interacts with XRCC1; the interaction is induced by SIRT1 and increased with the APEX1 acetylated form. Interacts with NPM1 (via N-terminal domain); the interaction is RNA-dependent and decreases in hydrogen peroxide-damaged cells. Interacts (via N-terminus) with YBX1 (via C-terminus); the interaction is increased in presence of APEX1 acetylated at Lys-6 and Lys-7. Interacts with HNRNPL; the interaction is DNA-dependent. Interacts (via N-terminus) with KPNA1 and KPNA2. Interacts with TXN; the interaction stimulates the FOS/JUN AP-1 complex DNA-binding activity in a redox-dependent manner. Interacts with GZMA, KRT8, MDM2, POLB, PRDX6, PRPF19, RPLP0, TOMM20 and WDR77. Binds to CDK5. Mg(2+) serves as cofactor. Mn(2+) is required as a cofactor. In terms of processing, phosphorylated. Phosphorylation by kinase PKC or casein kinase CK2 results in enhanced redox activity that stimulates binding of the FOS/JUN AP-1 complex to its cognate binding site. AP-endodeoxyribonuclease activity is not affected by CK2-mediated phosphorylation. Phosphorylation of Thr-232 by CDK5 in response to MPP(+)/MPTP (1-methyl-4-phenylpyridinium) reduces AP-endodeoxyribonuclease activity resulting in accumulation of DNA damage and contributing to neuronal death. Post-translationally, acetylated on Lys-6 and Lys-7. Acetylation is increased by the transcriptional coactivator EP300 acetyltransferase, genotoxic agents like H(2)O(2) and methyl methanesulfonate (MMS). Acetylation increases its binding affinity to the negative calcium response element (nCaRE) DNA promoter. The acetylated form induces a stronger binding of YBX1 to the Y-box sequence in the MDR1 promoter than the unacetylated form. Deacetylated on lysines. Lys-6 and Lys-7 are deacetylated by SIRT1. Cleaved at Lys-30 by granzyme A to create the mitochondrial form; leading in reduction of binding to DNA, AP endodeoxyribonuclease activity, redox activation of transcription factors and to enhanced cell death. Cleaved by granzyme K; leading to intracellular ROS accumulation and enhanced cell death after oxidative stress. In terms of processing, cys-64 and Cys-92 are nitrosylated in response to nitric oxide (NO) and lead to the exposure of the nuclear export signal (NES). Post-translationally, ubiquitinated by MDM2; leading to translocation to the cytoplasm and proteasomal degradation. In terms of tissue distribution, expressed in both resting and stimulated B cells stimulated to switch (at protein level).

Its subcellular location is the nucleus. It is found in the nucleolus. It localises to the nucleus speckle. The protein localises to the endoplasmic reticulum. The protein resides in the cytoplasm. Its subcellular location is the mitochondrion. The catalysed reaction is a deoxyribonucleotide-2'-deoxyribose-5'-monophosphate-DNA + H2O = a 5'-end 2'-deoxyribose-5'-monophosphate-DNA + a 3'-end 2'-deoxyribonucleotide-DNA + H(+). It carries out the reaction Exonucleolytic cleavage in the 3'- to 5'-direction to yield nucleoside 5'-phosphates.. The enzyme catalyses a 3'-end 2'-deoxyribonucleotide-3'-phosphoglycolate-DNA + H2O = 2-phosphoglycolate + a 3'-end 2'-deoxyribonucleotide-DNA + H(+). It catalyses the reaction a 3'-end 2'-deoxyribonucleotide-8-oxoguanine-DNA + H2O = 8-oxo-dGMP + a 3'-end 2'-deoxyribonucleotide-DNA + H(+). NPM1 stimulates endodeoxyribonuclease activity on double-stranded DNA with AP sites, but inhibits endoribonuclease activity on single-stranded RNA containing AP sites. Functionally, multifunctional protein that plays a central role in the cellular response to oxidative stress. The two major activities of APEX1 are DNA repair and redox regulation of transcriptional factors. Functions as an apurinic/apyrimidinic (AP) endodeoxyribonuclease in the base excision repair (BER) pathway of DNA lesions induced by oxidative and alkylating agents. Initiates repair of AP sites in DNA by catalyzing hydrolytic incision of the phosphodiester backbone immediately adjacent to the damage, generating a single-strand break with 5'-deoxyribose phosphate and 3'-hydroxyl ends. Also incises at AP sites in the DNA strand of DNA/RNA hybrids, single-stranded DNA regions of R-loop structures, and single-stranded RNA molecules. Operates at switch sites of immunoglobulin (Ig) constant regions where it mediates Ig isotype class switch recombination. Processes AP sites induced by successive action of AICDA and UNG. Generates staggered nicks in opposite DNA strands resulting in the formation of double-strand DNA breaks that are finally resolved via non-homologous end joining repair pathway. Has 3'-5' exodeoxyribonuclease activity on mismatched deoxyribonucleotides at the 3' termini of nicked or gapped DNA molecules during short-patch BER. Possesses DNA 3' phosphodiesterase activity capable of removing lesions (such as phosphoglycolate and 8-oxoguanine) blocking the 3' side of DNA strand breaks. Also acts as an endoribonuclease involved in the control of single-stranded RNA metabolism. Plays a role in regulating MYC mRNA turnover by preferentially cleaving in between UA and CA dinucleotides of the MYC coding region determinant (CRD). In association with NMD1, plays a role in the rRNA quality control process during cell cycle progression. Acts as a loading factor for POLB onto non-incised AP sites in DNA and stimulates the 5'-terminal deoxyribose 5'-phosphate (dRp) excision activity of POLB. Exerts reversible nuclear redox activity to regulate DNA binding affinity and transcriptional activity of transcriptional factors by controlling the redox status of their DNA-binding domain, such as the FOS/JUN AP-1 complex after exposure to IR. Involved in calcium-dependent down-regulation of parathyroid hormone (PTH) expression by binding to negative calcium response elements (nCaREs). Together with HNRNPL or the dimer XRCC5/XRCC6, associates with nCaRE, acting as an activator of transcriptional repression. May also play a role in the epigenetic regulation of gene expression by participating in DNA demethylation. Stimulates the YBX1-mediated MDR1 promoter activity, when acetylated at Lys-6 and Lys-7, leading to drug resistance. Plays a role in protection from granzyme-mediated cellular repair leading to cell death. Binds DNA and RNA. Associates, together with YBX1, on the MDR1 promoter. Together with NPM1, associates with rRNA. The protein is DNA repair nuclease/redox regulator APEX1 (Apex1) of Mus musculus (Mouse).